Consider the following 170-residue polypeptide: Cathelicidin antimicrobial peptide (170 aa).

Residues 1–30 form the signal peptide; sequence MKTQRDGPSLGRWSLVLLLLGLTMPLAITA. The propeptide at 31–131 is cathelin-like domain (CLD); the sequence is QVLSYQEAVL…DISCDKDERK (101 aa). 2 cysteine pairs are disulfide-bonded: C86–C97 and C108–C125. The interval 150-162 is active core; sequence FKKIGQKINDFLG.

This sequence belongs to the cathelicidin family. Monomer, homodimer or homotrimer (in vitro). Oligomerizes as tetra- or hexamer in solution (in vitro). Proteolytically cleaved by proteinase PRTN3 into antibacterial peptide LL-37. Proteolytically cleaved by cathepsin CTSG and neutrophil elastase ELANE. In terms of processing, resistant to proteolytic degradation in solution, and when bound to both zwitterionic (mimicking mammalian membranes) and negatively charged membranes (mimicking bacterial membranes). Post-translationally, after secretion onto the skin surface, the CAMP gene product is processed by a serine protease-dependent mechanism into multiple novel antimicrobial peptides distinct from and shorter than cathelicidin LL-37. These peptides show enhanced antimicrobial action, acquiring the ability to kill skin pathogens such as S.aureus, E.coli and C.albicans. These peptides have lost the ability to stimulate CXCL8/IL8 release from keratinocytes. The peptides act synergistically, killing bacteria at lower concentrations when present together, and maintain activity at increased salt condition.

The protein resides in the secreted. It localises to the vesicle. Antimicrobial protein that is an integral component of the innate immune system. Binds to bacterial lipopolysaccharides (LPS). Acts via neutrophil N-formyl peptide receptors to enhance the release of CXCL2. Postsecretory processing generates multiple cathelicidin antimicrobial peptides with various lengths which act as a topical antimicrobial defense in sweat on skin. The unprocessed precursor form, cathelicidin antimicrobial peptide, inhibits the growth of Gram-negative E.coli and E.aerogenes with efficiencies comparable to that of the mature peptide LL-37 (in vitro). Its function is as follows. Antimicrobial peptide that is an integral component of the innate immune system. Binds to bacterial lipopolysaccharides (LPS). Causes membrane permeabilization by forming transmembrane pores (in vitro). Causes lysis of E.coli. Exhibits antimicrobial activity against Gram-negative bacteria such as P.aeruginosa, S.typhimurium, E.aerogenes, E.coli and P.syringae, Gram-positive bacteria such as L.monocytogenes, S.epidermidis, S.pyogenes and S.aureus, as well as vancomycin-resistant enterococci (in vitro). Exhibits antimicrobial activity against methicillin-resistant S.aureus, P.mirabilis, and C.albicans in low-salt media, but not in media containing 100 mM NaCl (in vitro). Forms chiral supramolecular assemblies with quinolone signal (PQS) molecules of P.aeruginosa, which may lead to interference of bacterial quorum signaling and perturbance of bacterial biofilm formation. May form supramolecular fiber-like assemblies on bacterial membranes. Induces cytokine and chemokine producation as well as TNF/TNFA and CSF2/GMCSF production in normal human keratinocytes. Exhibits hemolytic activity against red blood cells. In terms of biological role, exhibits antimicrobial activity against E.coli and B.megaterium (in vitro). The chain is Cathelicidin antimicrobial peptide from Cebus capucinus (White-faced sapajou).